A 373-amino-acid chain; its full sequence is UDP-N-acetylglucosamine--N-acetylmuramyl-(pentapeptide) pyrophosphoryl-undecaprenol N-acetylglucosamine transferase (373 aa).

Residues 15–17, Asn126, Arg170, Ser198, and Gln300 each bind UDP-N-acetyl-alpha-D-glucosamine; that span reads TGG.

The protein belongs to the glycosyltransferase 28 family. MurG subfamily.

The protein resides in the cell inner membrane. It catalyses the reaction di-trans,octa-cis-undecaprenyl diphospho-N-acetyl-alpha-D-muramoyl-L-alanyl-D-glutamyl-meso-2,6-diaminopimeloyl-D-alanyl-D-alanine + UDP-N-acetyl-alpha-D-glucosamine = di-trans,octa-cis-undecaprenyl diphospho-[N-acetyl-alpha-D-glucosaminyl-(1-&gt;4)]-N-acetyl-alpha-D-muramoyl-L-alanyl-D-glutamyl-meso-2,6-diaminopimeloyl-D-alanyl-D-alanine + UDP + H(+). It functions in the pathway cell wall biogenesis; peptidoglycan biosynthesis. In terms of biological role, cell wall formation. Catalyzes the transfer of a GlcNAc subunit on undecaprenyl-pyrophosphoryl-MurNAc-pentapeptide (lipid intermediate I) to form undecaprenyl-pyrophosphoryl-MurNAc-(pentapeptide)GlcNAc (lipid intermediate II). This Methylobacterium nodulans (strain LMG 21967 / CNCM I-2342 / ORS 2060) protein is UDP-N-acetylglucosamine--N-acetylmuramyl-(pentapeptide) pyrophosphoryl-undecaprenol N-acetylglucosamine transferase.